The primary structure comprises 583 residues: Nuclear hormone receptor family member nhr-31 (583 aa).

Residues 43-77 form a disordered region; sequence DLRTSGATSSSGPATSYIIRPSDKQPTVSSGGSQN. Residues 46–58 are compositionally biased toward low complexity; that stretch reads TSGATSSSGPATS. The span at 66 to 77 shows a compositional bias: polar residues; sequence KQPTVSSGGSQN. The segment at residues 79-154 is a DNA-binding region (nuclear receptor); the sequence is DSVCAVCGDG…AGMDPKAVRP (76 aa). NR C4-type zinc fingers lie at residues 82–102 and 118–142; these read CAVC…CYGC and CRFS…FQRC. Residues 195–464 form the NR LBD domain; sequence ETRILLMQLM…DNLLAEMFGD (270 aa).

The protein belongs to the nuclear hormone receptor family.

Its subcellular location is the nucleus. Its function is as follows. Orphan nuclear receptor. The protein is Nuclear hormone receptor family member nhr-31 (nhr-31) of Caenorhabditis elegans.